The primary structure comprises 124 residues: Ribonuclease pancreatic (124 aa).

Basic and acidic residues predominate over residues lysine 1–methionine 13. Residues lysine 1–tyrosine 25 are disordered. The substrate site is built by lysine 7 and arginine 10. Histidine 12 functions as the Proton acceptor in the catalytic mechanism. Cystine bridges form between cysteine 26–cysteine 84, cysteine 40–cysteine 95, cysteine 58–cysteine 110, and cysteine 65–cysteine 72. Residues lysine 41–threonine 45, lysine 66, and arginine 85 contribute to the substrate site. Catalysis depends on histidine 119, which acts as the Proton donor.

It belongs to the pancreatic ribonuclease family. Monomer. Interacts with and forms tight 1:1 complexes with RNH1. Dimerization of two such complexes may occur. Interaction with RNH1 inhibits this protein. In terms of tissue distribution, pancreas.

The protein resides in the secreted. It catalyses the reaction an [RNA] containing cytidine + H2O = an [RNA]-3'-cytidine-3'-phosphate + a 5'-hydroxy-ribonucleotide-3'-[RNA].. The enzyme catalyses an [RNA] containing uridine + H2O = an [RNA]-3'-uridine-3'-phosphate + a 5'-hydroxy-ribonucleotide-3'-[RNA].. Endonuclease that catalyzes the cleavage of RNA on the 3' side of pyrimidine nucleotides. Acts on single-stranded and double-stranded RNA. This is Ribonuclease pancreatic (RNASE1) from Tragelaphus oryx (Eland).